Reading from the N-terminus, the 326-residue chain is MRVLIVKTSSMGDVLHTLPALTDAQQAIPGIKFDWVVEEGFAQIPSWHAAVERVIPVAIRRWRKAWFSAPIKAERKAFREALQAKNYDAVIDAQGLVKSAALVTRLAHGVKHGMDWQTAREPLASLFYNRKHHIAKQQHAVERTRELFAKSLGYSKPQTQGDYAIAQHFLTNLPTDAGEYAVFLHATTRDDKHWPEEHWRELIGLLADSGIRIKLPWGAPHEEERAKRLAEGFAYVEVLPKMSLEGVARVLAGAKFVVSVDTGLSHLTAALDRPNITVYGPTDPGLIGGYGKNQMVCRAPGNELSQLTANAVKQFIEENAEKAAMI.

Positions 187, 188, 192, 222, and 242 each coordinate ADP. ADP-L-glycero-beta-D-manno-heptose-binding residues include Thr-187, Thr-188, Lys-192, Glu-222, Met-242, Asp-261, Thr-262, Gly-263, and His-266. Positions 262 and 263 each coordinate ADP.

Belongs to the glycosyltransferase 9 family. Monomer.

It is found in the cell inner membrane. It carries out the reaction an alpha-Kdo-(2-&gt;4)-alpha-Kdo-(2-&gt;6)-lipid A + ADP-L-glycero-beta-D-manno-heptose = an L-alpha-D-Hep-(1-&gt;5)-[alpha-Kdo-(2-&gt;4)]-alpha-Kdo-(2-&gt;6)-lipid A + ADP + H(+). The enzyme catalyses alpha-Kdo-(2-&gt;4)-alpha-Kdo-(2-&gt;6)-lipid A (E. coli) + ADP-L-glycero-beta-D-manno-heptose = L-alpha-D-Hep-(1-&gt;5)-[alpha-Kdo-(2-&gt;4)]-alpha-Kdo-(2-&gt;6)-lipid A (E. coli) + ADP + H(+). Its pathway is bacterial outer membrane biogenesis; LPS core biosynthesis. Inhibited by ADP-L-glycero-beta-D-gluco-2-deoxy-2-fluoro-heptose (ADP-2F-heptose), a non-cleavable analog of the substrate ADP-L-glycero-beta-D-manno-heptose. Its function is as follows. Glycosyltransferase involved in the biosynthesis of the core oligosaccharide region of lipopolysaccharide (LPS). Catalyzes the addition of the first heptose unit to one 3-deoxy-D-manno-octulosonic acid (Kdo) residue of the Kdo2-lipid A module. This Escherichia coli O18:K1:H7 (strain RS218 / NMEC) protein is Lipopolysaccharide heptosyltransferase 1.